The primary structure comprises 445 residues: Histidinol dehydrogenase (445 aa).

Tyr138, Gln199, and Asn222 together coordinate NAD(+). Residues Ser245, Gln267, and His270 each coordinate substrate. Residues Gln267 and His270 each contribute to the Zn(2+) site. Catalysis depends on proton acceptor residues Glu335 and His336. 4 residues coordinate substrate: His336, Asp369, Glu423, and His428. Asp369 contributes to the Zn(2+) binding site. A Zn(2+)-binding site is contributed by His428.

This sequence belongs to the histidinol dehydrogenase family. Requires Zn(2+) as cofactor.

It carries out the reaction L-histidinol + 2 NAD(+) + H2O = L-histidine + 2 NADH + 3 H(+). The protein operates within amino-acid biosynthesis; L-histidine biosynthesis; L-histidine from 5-phospho-alpha-D-ribose 1-diphosphate: step 9/9. In terms of biological role, catalyzes the sequential NAD-dependent oxidations of L-histidinol to L-histidinaldehyde and then to L-histidine. The protein is Histidinol dehydrogenase of Burkholderia pseudomallei (strain 1710b).